Reading from the N-terminus, the 266-residue chain is Imidazole glycerol phosphate synthase subunit HisF (266 aa).

Catalysis depends on residues Asp11 and Asp130. The interval 134–157 (RTPEEAARPGPDGAPRGEGWDVYS) is disordered.

The protein belongs to the HisA/HisF family. Heterodimer of HisH and HisF.

The protein localises to the cytoplasm. The enzyme catalyses 5-[(5-phospho-1-deoxy-D-ribulos-1-ylimino)methylamino]-1-(5-phospho-beta-D-ribosyl)imidazole-4-carboxamide + L-glutamine = D-erythro-1-(imidazol-4-yl)glycerol 3-phosphate + 5-amino-1-(5-phospho-beta-D-ribosyl)imidazole-4-carboxamide + L-glutamate + H(+). Its pathway is amino-acid biosynthesis; L-histidine biosynthesis; L-histidine from 5-phospho-alpha-D-ribose 1-diphosphate: step 5/9. Functionally, IGPS catalyzes the conversion of PRFAR and glutamine to IGP, AICAR and glutamate. The HisF subunit catalyzes the cyclization activity that produces IGP and AICAR from PRFAR using the ammonia provided by the HisH subunit. In Paracidovorax citrulli (strain AAC00-1) (Acidovorax citrulli), this protein is Imidazole glycerol phosphate synthase subunit HisF.